Reading from the N-terminus, the 142-residue chain is Large ribosomal subunit protein uL11 (142 aa).

Belongs to the universal ribosomal protein uL11 family. As to quaternary structure, part of the ribosomal stalk of the 50S ribosomal subunit. Interacts with L10 and the large rRNA to form the base of the stalk. L10 forms an elongated spine to which L12 dimers bind in a sequential fashion forming a multimeric L10(L12)X complex. In terms of processing, one or more lysine residues are methylated.

Its function is as follows. Forms part of the ribosomal stalk which helps the ribosome interact with GTP-bound translation factors. This is Large ribosomal subunit protein uL11 from Xanthomonas campestris pv. campestris (strain B100).